A 401-amino-acid chain; its full sequence is Tumor necrosis factor receptor superfamily member 11B (401 aa).

The first 21 residues, M1–Q21, serve as a signal peptide directing secretion. 4 TNFR-Cys repeats span residues F24–C62, C65–C105, C107–C142, and C145–C185. Cystine bridges form between C41-C54, C44-C62, C65-C80, C83-C97, C87-C105, C107-C118, C124-C142, and C145-C160. N98 is a glycosylation site (N-linked (GlcNAc...) asparagine). N152, N165, and N178 each carry an N-linked (GlcNAc...) asparagine glycan. C166 and C185 form a disulfide bridge. Death domains lie at D198 to K269 and I270 to L365. N289 carries an N-linked (GlcNAc...) asparagine glycan.

In terms of assembly, homodimer. Interacts with TNFSF10 and TNFSF11. Post-translationally, N-glycosylated. Contains sialic acid residues. The N-terminus is blocked. As to expression, highly expressed in adult lung, heart, kidney, liver, spleen, thymus, prostate, ovary, small intestine, thyroid, lymph node, trachea, adrenal gland, testis, and bone marrow. Detected at very low levels in brain, placenta and skeletal muscle. Highly expressed in fetal kidney, liver and lung.

It localises to the secreted. In terms of biological role, acts as a decoy receptor for TNFSF11/RANKL and thereby neutralizes its function in osteoclastogenesis. Inhibits the activation of osteoclasts and promotes osteoclast apoptosis in vitro. Bone homeostasis seems to depend on the local ratio between TNFSF11 and TNFRSF11B. May also play a role in preventing arterial calcification. May act as decoy receptor for TNFSF10/TRAIL and protect against apoptosis. TNFSF10/TRAIL binding blocks the inhibition of osteoclastogenesis. This chain is Tumor necrosis factor receptor superfamily member 11B (TNFRSF11B), found in Homo sapiens (Human).